Here is a 240-residue protein sequence, read N- to C-terminus: Protein FAM246C (240 aa).

Disordered regions lie at residues 1 to 117 (MAEP…WRSA) and 161 to 240 (LPAA…TRAA). Basic and acidic residues-rich tracts occupy residues 19–31 (EVLR…RRDP) and 60–74 (AASR…KLVE). The span at 165 to 175 (SPAPSPAPRPA) shows a compositional bias: pro residues. Residues 176–187 (ARPCRGRSAPLA) show a composition bias toward low complexity.

It belongs to the FAM246 family.

The chain is Protein FAM246C from Homo sapiens (Human).